Reading from the N-terminus, the 586-residue chain is Tetratricopeptide repeat protein 39B (586 aa).

TPR repeat units lie at residues 292-325 (SIIL…QQEW), 483-516 (CLVQ…EKRV), and 524-557 (PFTF…YKDY).

The protein belongs to the TTC39 family.

Its function is as follows. May be involved in lipid metabolism. The chain is Tetratricopeptide repeat protein 39B (ttc39b) from Xenopus laevis (African clawed frog).